Here is a 402-residue protein sequence, read N- to C-terminus: Ferredoxin--NADP reductase (402 aa).

Positions 18–74 (NRLFIYEVVGLGGDGRNENSLVRKSGTTFITVPYARMNQEMQRITKLGGKIVSIRPA) constitute a CpcD-like domain. The interval 80–101 (IVSEGQSSAQASAQSPMASSTK) is disordered. Over residues 85-99 (QSSAQASAQSPMASS) the composition is skewed to low complexity. An FAD-binding FR-type domain is found at 120–245 (KTPFLGKCIE…TGPVGKEMLL (126 aa)). Residues 179–182 (RLYS), 200–202 (CVR), tyrosine 206, 218–220 (VCS), and threonine 260 each bind FAD. Positions 182 and 202 each coordinate NADP(+). Residues threonine 260, 292 to 293 (VP), 322 to 323 (SR), lysine 332, 332 to 336 (KVYVQ), 361 to 362 (GL), and glutamate 400 contribute to the NADP(+) site.

It belongs to the ferredoxin--NADP reductase type 1 family. The cofactor is FAD.

It is found in the cellular thylakoid membrane. It catalyses the reaction 2 reduced [2Fe-2S]-[ferredoxin] + NADP(+) + H(+) = 2 oxidized [2Fe-2S]-[ferredoxin] + NADPH. This chain is Ferredoxin--NADP reductase (petH), found in Picosynechococcus sp. (strain ATCC 27264 / PCC 7002 / PR-6) (Agmenellum quadruplicatum).